The chain runs to 249 residues: Tryptophan synthase alpha chain (249 aa).

Catalysis depends on proton acceptor residues glutamate 43 and aspartate 54.

Belongs to the TrpA family. As to quaternary structure, tetramer of two alpha and two beta chains.

It catalyses the reaction (1S,2R)-1-C-(indol-3-yl)glycerol 3-phosphate + L-serine = D-glyceraldehyde 3-phosphate + L-tryptophan + H2O. It functions in the pathway amino-acid biosynthesis; L-tryptophan biosynthesis; L-tryptophan from chorismate: step 5/5. Its function is as follows. The alpha subunit is responsible for the aldol cleavage of indoleglycerol phosphate to indole and glyceraldehyde 3-phosphate. This chain is Tryptophan synthase alpha chain, found in Campylobacter jejuni subsp. jejuni serotype O:6 (strain 81116 / NCTC 11828).